The chain runs to 98 residues: Co-chaperonin GroES (98 aa).

This sequence belongs to the GroES chaperonin family. In terms of assembly, heptamer of 7 subunits arranged in a ring. Interacts with the chaperonin GroEL.

The protein resides in the cytoplasm. Its function is as follows. Together with the chaperonin GroEL, plays an essential role in assisting protein folding. The GroEL-GroES system forms a nano-cage that allows encapsulation of the non-native substrate proteins and provides a physical environment optimized to promote and accelerate protein folding. GroES binds to the apical surface of the GroEL ring, thereby capping the opening of the GroEL channel. This is Co-chaperonin GroES from Kineococcus radiotolerans (strain ATCC BAA-149 / DSM 14245 / SRS30216).